The following is an 862-amino-acid chain: Rab GTPase-binding effector protein 1 (862 aa).

A2 carries the N-acetylalanine modification. The stretch at 11-345 (DVSLQQRVAE…KKADVEEEIK (335 aa)) forms a coiled coil. K282 is modified (N6-acetyllysine). Residues 315–338 (ELKKKDQEDDEQQRLNKRKDHKKA) form a disordered region. 3 positions are modified to phosphoserine: S374, S377, and S407. T408 is modified (phosphothreonine). S410 is subject to Phosphoserine. The interval 435-447 (DESDFGPLVGADS) is interaction with AP1G1, AP1G2, GGA1, GGA2 and GGA3. Residues 534–816 (DMCSNYEKQL…LQTELDVSEQ (283 aa)) are a coiled coil.

It belongs to the rabaptin family. As to quaternary structure, homodimer when bound to RAB5A. Heterodimer with RABGEF1. The heterodimer binds RAB4A and RAB5A that have been activated by GTP-binding. Interacts with TSC2. Interacts with GGA1 (via GAE domain), GGA2 (via GAE domain) and GGA3 (via GAE domain). Interacts with AP1G1 (via GAE domain). Interacts with AP1G2 (via GAE domain). Interacts with ECPAS. Interacts with KCNH1. Interacts with PKD1 (via C-terminal domain) and GGA1; the interactions recruit PKD1:PKD2 complex to GGA1 and ARL3 at trans-Golgi network. In terms of processing, proteolytic cleavage by caspases in apoptotic cells causes loss of endosome fusion activity.

Its subcellular location is the cytoplasm. The protein localises to the early endosome. It localises to the recycling endosome. The protein resides in the cytoplasmic vesicle. In terms of biological role, rab effector protein acting as linker between gamma-adaptin, RAB4A and RAB5A. Involved in endocytic membrane fusion and membrane trafficking of recycling endosomes. Involved in KCNH1 channels trafficking to and from the cell membrane. Stimulates RABGEF1 mediated nucleotide exchange on RAB5A. Mediates the traffic of PKD1:PKD2 complex from the endoplasmic reticulum through the Golgi to the cilium. The chain is Rab GTPase-binding effector protein 1 (RABEP1) from Homo sapiens (Human).